The following is a 365-amino-acid chain: Transmembrane protein 25 (365 aa).

A signal peptide spans 1-26 (MELPLSQATLRHTLLLLPALLSSGQG). Residues 27–232 (ELAPQIDGQT…APGLLATRIE (206 aa)) are Extracellular-facing. An Ig-like domain is found at 30–123 (PQIDGQTWAE…SGRPANASVI (94 aa)). Cysteine 52 and cysteine 107 form a disulfide bridge. Residues asparagine 106, asparagine 162, asparagine 192, and asparagine 205 are each glycosylated (N-linked (GlcNAc...) asparagine). The chain crosses the membrane as a helical span at residues 233 to 253 (VPLLGIVVAGGLALGTLVGFS). Topologically, residues 254 to 365 (TLVACLVCRK…SSVSSDEIWL (112 aa)) are cytoplasmic.

In terms of assembly, interacts with GRIN2B. In terms of tissue distribution, expressed throughout the brain with higher levels within the hippocampus.

The protein localises to the late endosome. Its subcellular location is the lysosome. The protein resides in the cell membrane. It localises to the secreted. Functionally, in neurons, modulates the degradation of NMDA receptor GRIN2B subunit. Plays a role in the regulation of neuronal excitability. The polypeptide is Transmembrane protein 25 (Mus musculus (Mouse)).